Here is a 436-residue protein sequence, read N- to C-terminus: UDP-N-acetylglucosamine 1-carboxyvinyltransferase (436 aa).

22-23 lines the phosphoenolpyruvate pocket; the sequence is KN. Arg96 provides a ligand contact to UDP-N-acetyl-alpha-D-glucosamine. The active-site Proton donor is Cys120. Cys120 is modified (2-(S-cysteinyl)pyruvic acid O-phosphothioketal). UDP-N-acetyl-alpha-D-glucosamine is bound by residues 125-129, Asp309, and Ile331; that span reads RPIDL.

The protein belongs to the EPSP synthase family. MurA subfamily.

Its subcellular location is the cytoplasm. It catalyses the reaction phosphoenolpyruvate + UDP-N-acetyl-alpha-D-glucosamine = UDP-N-acetyl-3-O-(1-carboxyvinyl)-alpha-D-glucosamine + phosphate. Its pathway is cell wall biogenesis; peptidoglycan biosynthesis. Its function is as follows. Cell wall formation. Adds enolpyruvyl to UDP-N-acetylglucosamine. In Acidobacterium capsulatum (strain ATCC 51196 / DSM 11244 / BCRC 80197 / JCM 7670 / NBRC 15755 / NCIMB 13165 / 161), this protein is UDP-N-acetylglucosamine 1-carboxyvinyltransferase.